Here is a 324-residue protein sequence, read N- to C-terminus: Beta-ketoacyl-[acyl-carrier-protein] synthase III (324 aa).

Residues Cys-114 and His-251 contribute to the active site. The interval 252 to 256 is ACP-binding; that stretch reads QANQR. The active site involves Asn-281.

Belongs to the thiolase-like superfamily. FabH family. As to quaternary structure, homodimer.

It localises to the cytoplasm. The catalysed reaction is malonyl-[ACP] + acetyl-CoA + H(+) = 3-oxobutanoyl-[ACP] + CO2 + CoA. It functions in the pathway lipid metabolism; fatty acid biosynthesis. Functionally, catalyzes the condensation reaction of fatty acid synthesis by the addition to an acyl acceptor of two carbons from malonyl-ACP. Catalyzes the first condensation reaction which initiates fatty acid synthesis and may therefore play a role in governing the total rate of fatty acid production. Possesses both acetoacetyl-ACP synthase and acetyl transacylase activities. Its substrate specificity determines the biosynthesis of branched-chain and/or straight-chain of fatty acids. The protein is Beta-ketoacyl-[acyl-carrier-protein] synthase III of Rhodospirillum rubrum (strain ATCC 11170 / ATH 1.1.1 / DSM 467 / LMG 4362 / NCIMB 8255 / S1).